The chain runs to 515 residues: ATP synthase subunit alpha (515 aa).

169–176 (GDRQTGKT) serves as a coordination point for ATP.

The protein belongs to the ATPase alpha/beta chains family. As to quaternary structure, F-type ATPases have 2 components, CF(1) - the catalytic core - and CF(0) - the membrane proton channel. CF(1) has five subunits: alpha(3), beta(3), gamma(1), delta(1), epsilon(1). CF(0) has three main subunits: a(1), b(2) and c(9-12). The alpha and beta chains form an alternating ring which encloses part of the gamma chain. CF(1) is attached to CF(0) by a central stalk formed by the gamma and epsilon chains, while a peripheral stalk is formed by the delta and b chains.

It is found in the cell inner membrane. The enzyme catalyses ATP + H2O + 4 H(+)(in) = ADP + phosphate + 5 H(+)(out). Produces ATP from ADP in the presence of a proton gradient across the membrane. The alpha chain is a regulatory subunit. This is ATP synthase subunit alpha from Myxococcus xanthus.